A 238-amino-acid chain; its full sequence is MLFALPALNDNYIWLYQRENLPLIIVDLPETDKLFAWLEKQNATIEAVLLTHEHDDHTQGVSAFKKRYPTVPIYGPQECEKKGATQIVNEGKILTANYQIDVIPTGGHTKQHVSFLVDNHLFCGDALFSAGCGRVFTGNYALMFEGLQRLNTLPDETIVCPAHEYTLGNLAFAETVLVDKSAVEKSAVEKQRIFVETQRAENKPSLPTTLKLEREINPFLQAKTLEEFTALRKAKDIF.

Zn(2+) is bound by residues His52, His54, Asp56, His57, His108, Asp125, and His163.

It belongs to the metallo-beta-lactamase superfamily. Glyoxalase II family. As to quaternary structure, monomer. The cofactor is Zn(2+).

It carries out the reaction an S-(2-hydroxyacyl)glutathione + H2O = a 2-hydroxy carboxylate + glutathione + H(+). It functions in the pathway secondary metabolite metabolism; methylglyoxal degradation; (R)-lactate from methylglyoxal: step 2/2. Functionally, thiolesterase that catalyzes the hydrolysis of S-D-lactoyl-glutathione to form glutathione and D-lactic acid. This chain is Hydroxyacylglutathione hydrolase, found in Haemophilus influenzae (strain ATCC 51907 / DSM 11121 / KW20 / Rd).